The following is a 207-amino-acid chain: Large ribosomal subunit protein uL4 (207 aa).

The disordered stretch occupies residues 49–78 (HAVKNRSAVSGGGRKPWRQKGTGRARQGSI).

This sequence belongs to the universal ribosomal protein uL4 family. In terms of assembly, part of the 50S ribosomal subunit.

Its function is as follows. One of the primary rRNA binding proteins, this protein initially binds near the 5'-end of the 23S rRNA. It is important during the early stages of 50S assembly. It makes multiple contacts with different domains of the 23S rRNA in the assembled 50S subunit and ribosome. Functionally, forms part of the polypeptide exit tunnel. The protein is Large ribosomal subunit protein uL4 of Streptococcus agalactiae serotype Ia (strain ATCC 27591 / A909 / CDC SS700).